The sequence spans 527 residues: Berberine bridge enzyme-like 14 (527 aa).

The first 23 residues, 1–23 (MKSSTTQTLIFTVFLLLIPTSFA), serve as a signal peptide directing secretion. Cys35 and Cys96 form a disulfide bridge. N-linked (GlcNAc...) asparagine glycans are attached at residues Asn47, Asn72, Asn161, Asn296, Asn328, Asn396, and Asn481. In terms of domain architecture, FAD-binding PCMH-type spans 74-249 (TTRKPVAIVA…LAWKIKLVPV (176 aa)). The 6-(S-cysteinyl)-8alpha-(pros-histidyl)-FAD (His-Cys) cross-link spans 111–174 (HDYDGMSYLS…NLRGFPAGIC (64 aa)).

The protein belongs to the oxygen-dependent FAD-linked oxidoreductase family. Requires FAD as cofactor. The FAD cofactor is bound via a bicovalent 6-S-cysteinyl, 8alpha-N1-histidyl FAD linkage.

The protein resides in the secreted. It localises to the cell wall. This chain is Berberine bridge enzyme-like 14, found in Arabidopsis thaliana (Mouse-ear cress).